Here is a 191-residue protein sequence, read N- to C-terminus: Flavin prenyltransferase UbiX (191 aa).

Residues 13–15 (GAS), threonine 39, 90–93 (TMKT), and arginine 125 contribute to the FMN site. Dimethylallyl phosphate-binding residues include tyrosine 155 and lysine 171.

The protein belongs to the UbiX/PAD1 family.

It catalyses the reaction dimethylallyl phosphate + FMNH2 = prenylated FMNH2 + phosphate. Its function is as follows. Flavin prenyltransferase that catalyzes the synthesis of the prenylated FMN cofactor (prenyl-FMN) for 4-hydroxy-3-polyprenylbenzoic acid decarboxylase UbiD. The prenyltransferase is metal-independent and links a dimethylallyl moiety from dimethylallyl monophosphate (DMAP) to the flavin N5 and C6 atoms of FMN. This chain is Flavin prenyltransferase UbiX, found in Methanothermobacter thermautotrophicus (strain ATCC 29096 / DSM 1053 / JCM 10044 / NBRC 100330 / Delta H) (Methanobacterium thermoautotrophicum).